The following is a 142-amino-acid chain: Gonadotropin subunit beta-2 (142 aa).

The signal sequence occupies residues 1–23 (MLGLHVGTLISLFLCILLEPIEG). 6 cysteine pairs are disulfide-bonded: cysteine 29–cysteine 77, cysteine 43–cysteine 92, cysteine 46–cysteine 130, cysteine 54–cysteine 108, cysteine 58–cysteine 110, and cysteine 113–cysteine 120. Asparagine 33 carries N-linked (GlcNAc...) asparagine glycosylation.

It belongs to the glycoprotein hormones subunit beta family. Heterodimer of an alpha and a beta chain.

The protein resides in the secreted. Functionally, involved in gametogenesis and steroidogenesis. This chain is Gonadotropin subunit beta-2 (cgbb), found in Oncorhynchus tshawytscha (Chinook salmon).